Consider the following 270-residue polypeptide: tRNA pseudouridine synthase A (270 aa).

The active-site Nucleophile is Asp-52. Tyr-110 contacts substrate.

This sequence belongs to the tRNA pseudouridine synthase TruA family. As to quaternary structure, homodimer.

The enzyme catalyses uridine(38/39/40) in tRNA = pseudouridine(38/39/40) in tRNA. Functionally, formation of pseudouridine at positions 38, 39 and 40 in the anticodon stem and loop of transfer RNAs. The polypeptide is tRNA pseudouridine synthase A (Paraburkholderia xenovorans (strain LB400)).